The following is a 94-amino-acid chain: uncharacterized protein (94 aa).

An HTH cro/C1-type domain is found at 13–67 (IQESLDELNVSLREFARAMEIAPSTASRLLTGKAALTPEMAIKLSVVIGSSPQMW). Positions 24-43 (LREFARAMEIAPSTASRLLT) form a DNA-binding region, H-T-H motif.

Belongs to the VapA/VapI family.

This is an uncharacterized protein from Escherichia coli (strain K12).